The following is a 1358-amino-acid chain: DNA-directed RNA polymerase subunit beta (1358 aa).

This sequence belongs to the RNA polymerase beta chain family. The RNAP catalytic core consists of 2 alpha, 1 beta, 1 beta' and 1 omega subunit. When a sigma factor is associated with the core the holoenzyme is formed, which can initiate transcription.

The catalysed reaction is RNA(n) + a ribonucleoside 5'-triphosphate = RNA(n+1) + diphosphate. Functionally, DNA-dependent RNA polymerase catalyzes the transcription of DNA into RNA using the four ribonucleoside triphosphates as substrates. The polypeptide is DNA-directed RNA polymerase subunit beta (Thioalkalivibrio sulfidiphilus (strain HL-EbGR7)).